Reading from the N-terminus, the 391-residue chain is Phosphoglycerate kinase (391 aa).

Substrate-binding positions include 21 to 23, arginine 36, 59 to 62, arginine 113, and arginine 146; these read DLN and HLGR. ATP contacts are provided by residues lysine 197, glutamate 319, and 345-348; that span reads GGDT.

It belongs to the phosphoglycerate kinase family. Monomer.

The protein resides in the cytoplasm. It catalyses the reaction (2R)-3-phosphoglycerate + ATP = (2R)-3-phospho-glyceroyl phosphate + ADP. The protein operates within carbohydrate degradation; glycolysis; pyruvate from D-glyceraldehyde 3-phosphate: step 2/5. This Shewanella baltica (strain OS185) protein is Phosphoglycerate kinase.